The following is a 248-amino-acid chain: Peptidyl-prolyl cis-trans isomerase, chloroplastic (248 aa).

In terms of domain architecture, PPIase cyclophilin-type spans 85-243 (FFDIEIGGES…KPCKIAKSGE (159 aa)). A disordered region spans residues 223–248 (QETSKLDNSPKKPCKIAKSGELPLDG).

It belongs to the cyclophilin-type PPIase family. As to expression, highly expressed in leaf.

It is found in the plastid. It localises to the chloroplast stroma. The catalysed reaction is [protein]-peptidylproline (omega=180) = [protein]-peptidylproline (omega=0). With respect to regulation, binds cyclosporin A (CsA). CsA mediates some of its effects via an inhibitory action on PPIase. Functionally, PPIases accelerate the folding of proteins. It catalyzes the cis-trans isomerization of proline imidic peptide bonds in oligopeptides. The sequence is that of Peptidyl-prolyl cis-trans isomerase, chloroplastic from Vicia faba (Broad bean).